A 295-amino-acid polypeptide reads, in one-letter code: Protoheme IX farnesyltransferase 2 (295 aa).

A run of 9 helical transmembrane segments spans residues 9-29, 36-56, 85-105, 108-128, 135-155, 163-183, 209-229, 230-250, and 263-283; these read ITKP…FFLA, LAIF…GCVF, VALV…YYVA, LAAL…SLYL, GTLV…VAVS, LTLL…IAIF, ILLY…SGYA, GMSY…MAWT, and KLFV…SVDF.

It belongs to the UbiA prenyltransferase family. Protoheme IX farnesyltransferase subfamily.

Its subcellular location is the cell inner membrane. It catalyses the reaction heme b + (2E,6E)-farnesyl diphosphate + H2O = Fe(II)-heme o + diphosphate. It functions in the pathway porphyrin-containing compound metabolism; heme O biosynthesis; heme O from protoheme: step 1/1. Converts heme B (protoheme IX) to heme O by substitution of the vinyl group on carbon 2 of heme B porphyrin ring with a hydroxyethyl farnesyl side group. The chain is Protoheme IX farnesyltransferase 2 from Pseudomonas fluorescens (strain ATCC BAA-477 / NRRL B-23932 / Pf-5).